A 392-amino-acid chain; its full sequence is Tryptophan synthase beta chain (392 aa).

An N6-(pyridoxal phosphate)lysine modification is found at lysine 86.

Belongs to the TrpB family. In terms of assembly, tetramer of two alpha and two beta chains. Pyridoxal 5'-phosphate is required as a cofactor.

The catalysed reaction is (1S,2R)-1-C-(indol-3-yl)glycerol 3-phosphate + L-serine = D-glyceraldehyde 3-phosphate + L-tryptophan + H2O. Its pathway is amino-acid biosynthesis; L-tryptophan biosynthesis; L-tryptophan from chorismate: step 5/5. The beta subunit is responsible for the synthesis of L-tryptophan from indole and L-serine. The chain is Tryptophan synthase beta chain from Methanocorpusculum labreanum (strain ATCC 43576 / DSM 4855 / Z).